Here is a 428-residue protein sequence, read N- to C-terminus: Elongation factor 1-alpha (428 aa).

Residues lysine 5–threonine 225 enclose the tr-type G domain. The segment at glycine 14–serine 21 is G1. A GTP-binding site is contributed by glycine 14 to serine 21. Serine 21 is a Mg(2+) binding site. A G2 region spans residues glycine 70–aspartate 74. Residues aspartate 91 to glycine 94 are G3. GTP-binding positions include aspartate 91–histidine 95 and asparagine 149–aspartate 152. Positions asparagine 149–aspartate 152 are G4. The segment at alanine 189–leucine 191 is G5.

Belongs to the TRAFAC class translation factor GTPase superfamily. Classic translation factor GTPase family. EF-Tu/EF-1A subfamily.

It localises to the cytoplasm. The catalysed reaction is GTP + H2O = GDP + phosphate + H(+). Functionally, GTP hydrolase that promotes the GTP-dependent binding of aminoacyl-tRNA to the A-site of ribosomes during protein biosynthesis. This is Elongation factor 1-alpha from Methanocaldococcus jannaschii (strain ATCC 43067 / DSM 2661 / JAL-1 / JCM 10045 / NBRC 100440) (Methanococcus jannaschii).